The primary structure comprises 246 residues: Bromelain inhibitor (246 aa).

Positions 1–19 (MNMLLLFLHEVINGERVTL) are cleaved as a signal peptide. 5 disulfide bridges follow: Cys-22–Cys-42, Cys-25–Cys-74, Cys-27–Cys-40, Cys-49–Cys-56, and Cys-53–Cys-65. A propeptide spanning residues 31–35 (TSSSD) is cleaved from the precursor. 2 propeptides span residues 77 to 95 (PVSS…RVTL) and 107 to 111 (TSSSD). Cystine bridges form between Cys-98-Cys-118, Cys-101-Cys-150, Cys-103-Cys-116, Cys-125-Cys-132, and Cys-129-Cys-141. Propeptides lie at residues 153 to 171 (PVSS…RVTL) and 183 to 187 (TSSSD). 5 disulfide bridges follow: Cys-174–Cys-194, Cys-177–Cys-226, Cys-179–Cys-192, Cys-201–Cys-208, and Cys-205–Cys-217. Residues 229–246 (PVSSWEARQKIKLLQGRE) constitute a propeptide that is removed on maturation.

Belongs to the protease inhibitor I67 family. In terms of assembly, each inhibitor is composed of two chains, designated A and B linked by three disulfide bonds.

Weak inhibitor of cysteine proteinases. The sequence is that of Bromelain inhibitor from Ananas comosus (Pineapple).